The following is an 88-amino-acid chain: Arminin 1c (88 aa).

An N-terminal signal peptide occupies residues 1–18 (MKPVFVILFLTCIAFTYA). Positions 19–57 (ESYEDVKEEIKNEVEREIFEDLEEESDVLDSNVREFNDA) are excised as a propeptide. Val-85 is modified (valine amide).

The protein belongs to the arminin family. In terms of tissue distribution, expressed in entodermal epithelium along the body column.

The protein localises to the secreted. Its subcellular location is the target cell membrane. In terms of biological role, antimicrobial peptide with a broad-spectrum antimicrobial activity. Keeps its antibacterial activity under a wide range of salt concentrations that mimic physiological conditions of human blood, which is surprising, since Hydra is an obligate freshwater animal with nearly no salt tolerance. Does not affect red blood cells. The sequence is that of Arminin 1c from Hydra vulgaris (Hydra).